A 231-amino-acid polypeptide reads, in one-letter code: 7-cyano-7-deazaguanine synthase (231 aa).

8–18 (FSGGQDSTTCL) contacts ATP. Zn(2+) is bound by residues Cys-188, Cys-197, Cys-200, and Cys-203.

The protein belongs to the QueC family. The cofactor is Zn(2+).

The enzyme catalyses 7-carboxy-7-deazaguanine + NH4(+) + ATP = 7-cyano-7-deazaguanine + ADP + phosphate + H2O + H(+). The protein operates within purine metabolism; 7-cyano-7-deazaguanine biosynthesis. In terms of biological role, catalyzes the ATP-dependent conversion of 7-carboxy-7-deazaguanine (CDG) to 7-cyano-7-deazaguanine (preQ(0)). In Salmonella arizonae (strain ATCC BAA-731 / CDC346-86 / RSK2980), this protein is 7-cyano-7-deazaguanine synthase.